The sequence spans 249 residues: Flavin-dependent thymidylate synthase (249 aa).

Positions 8–225 constitute a ThyX domain; sequence VKVKLLEYTP…PNLFKYSGPS (218 aa). FAD-binding positions include Ser-62, 86–88, and Gln-94; that span reads RHR. Residues 83-86, 94-98, and Arg-164 contribute to the dUMP site; these read QLVR and QQSQR. The ThyX motif signature appears at 86-96; sequence RHRIASYSQQS. FAD-binding positions include 180 to 182 and Asn-186; that span reads NAR. Arg-191 lines the dUMP pocket. Arg-191 serves as the catalytic Involved in ionization of N3 of dUMP, leading to its activation.

It belongs to the thymidylate synthase ThyX family. Homotetramer. FAD serves as cofactor.

It carries out the reaction dUMP + (6R)-5,10-methylene-5,6,7,8-tetrahydrofolate + NADPH + H(+) = dTMP + (6S)-5,6,7,8-tetrahydrofolate + NADP(+). It functions in the pathway pyrimidine metabolism; dTTP biosynthesis. Its function is as follows. Catalyzes the reductive methylation of 2'-deoxyuridine-5'-monophosphate (dUMP) to 2'-deoxythymidine-5'-monophosphate (dTMP) while utilizing 5,10-methylenetetrahydrofolate (mTHF) as the methyl donor, and NADPH and FADH(2) as the reductant. The protein is Flavin-dependent thymidylate synthase of Clostridium tetani (strain Massachusetts / E88).